The chain runs to 153 residues: 6,7-dimethyl-8-ribityllumazine synthase (153 aa).

5-amino-6-(D-ribitylamino)uracil contacts are provided by residues phenylalanine 21, 55-57 (AFE), and 79-81 (TVI). 84-85 (AT) serves as a coordination point for (2S)-2-hydroxy-3-oxobutyl phosphate. The Proton donor role is filled by histidine 87. Phenylalanine 112 lines the 5-amino-6-(D-ribitylamino)uracil pocket. Arginine 126 is a binding site for (2S)-2-hydroxy-3-oxobutyl phosphate.

This sequence belongs to the DMRL synthase family. As to quaternary structure, forms an icosahedral capsid composed of 60 subunits, arranged as a dodecamer of pentamers.

The catalysed reaction is (2S)-2-hydroxy-3-oxobutyl phosphate + 5-amino-6-(D-ribitylamino)uracil = 6,7-dimethyl-8-(1-D-ribityl)lumazine + phosphate + 2 H2O + H(+). It functions in the pathway cofactor biosynthesis; riboflavin biosynthesis; riboflavin from 2-hydroxy-3-oxobutyl phosphate and 5-amino-6-(D-ribitylamino)uracil: step 1/2. Functionally, catalyzes the formation of 6,7-dimethyl-8-ribityllumazine by condensation of 5-amino-6-(D-ribitylamino)uracil with 3,4-dihydroxy-2-butanone 4-phosphate. This is the penultimate step in the biosynthesis of riboflavin. The protein is 6,7-dimethyl-8-ribityllumazine synthase of Bacillus cereus (strain 03BB102).